Reading from the N-terminus, the 89-residue chain is Cell division topological specificity factor (89 aa).

It belongs to the MinE family.

Functionally, prevents the cell division inhibition by proteins MinC and MinD at internal division sites while permitting inhibition at polar sites. This ensures cell division at the proper site by restricting the formation of a division septum at the midpoint of the long axis of the cell. This is Cell division topological specificity factor from Brucella anthropi (strain ATCC 49188 / DSM 6882 / CCUG 24695 / JCM 21032 / LMG 3331 / NBRC 15819 / NCTC 12168 / Alc 37) (Ochrobactrum anthropi).